We begin with the raw amino-acid sequence, 619 residues long: TOX high mobility group box family member 4 (619 aa).

Disordered regions lie at residues 153-227 (LGLS…QKPV) and 304-337 (DMDPAPPSQTPSPPPVAAADPASPAPASTEPPAL). Thr176 bears the Phosphothreonine mark. Phosphoserine is present on residues Ser178, Ser181, and Ser182. Positions 183 to 193 (LHEDGVEEFRR) are enriched in basic and acidic residues. The span at 208–218 (KQKAPKKRKKK) shows a compositional bias: basic residues. Positions 213 to 218 (KKRKKK) match the Nuclear localization signal motif. The HMG box DNA-binding region spans 223-291 (PQKPVSAYAL…EYLKALAAYK (69 aa)). The segment covering 307-319 (PAPPSQTPSPPPV) has biased composition (pro residues). Thr313 carries the post-translational modification Phosphothreonine. Residue Ser315 is modified to Phosphoserine. Over residues 320–337 (AAADPASPAPASTEPPAL) the composition is skewed to low complexity. An Asymmetric dimethylarginine modification is found at Arg479. The interval 507-529 (PPPVESSPEQPVNNSPETHTVEE) is disordered. A compositionally biased stretch (low complexity) spans 512–524 (SSPEQPVNNSPET). A phosphoserine mark is found at Ser548, Ser550, Ser558, Ser560, and Ser565.

Component of the PNUTS-PP1 phosphatase complex, composed of PPP1R10/PNUTS, TOX4, WDR82 and PPP1CA or PPP1CB or PPP1CC. Interacts with PPP1R10/PNUTS. Interacts with FOXO1 and CREB1 (increased by cAMP); FOXO1 and CREB1 are required for full induction of TOX4-dependent activity and the interactions are inhibited by insulin.

The protein resides in the nucleus. It localises to the chromosome. In liver, recruited to target gene promoters following treatment with dexamethasone and cAMP. Binding is decreased in presence of insulin. Its function is as follows. Transcription factor that modulates cell fate reprogramming from the somatic state to the pluripotent and neuronal fate. In liver, controls the expression of hormone-regulated gluconeogenic genes such as G6PC1 and PCK1. This regulation is independent of the insulin receptor activation. Also acts as a regulatory component of protein phosphatase 1 (PP1) complexes. Component of the PNUTS-PP1 protein phosphatase complex, a PP1 complex that regulates RNA polymerase II transcription pause-release. PNUTS-PP1 also plays a role in the control of chromatin structure and cell cycle progression during the transition from mitosis into interphase. In Bos taurus (Bovine), this protein is TOX high mobility group box family member 4 (TOX4).